A 154-amino-acid chain; its full sequence is S-protein homolog 12 (154 aa).

An N-terminal signal peptide occupies residues 1 to 30; the sequence is MGTNKIPKTLNGNLVLILIITIMMVTHSHG.

The protein belongs to the plant self-incompatibility (S1) protein family.

Its subcellular location is the secreted. The chain is S-protein homolog 12 from Arabidopsis thaliana (Mouse-ear cress).